The following is a 207-amino-acid chain: B2 protein (207 aa).

A disordered region spans residues Met1 to Leu68. Composition is skewed to low complexity over residues Asn8–Gly26 and Lys35–Lys52. The DCD domain maps to Glu72 to Glu204.

In Daucus carota (Wild carrot), this protein is B2 protein.